We begin with the raw amino-acid sequence, 787 residues long: Endonuclease MutS2 (787 aa).

Residue Gly335 to Thr342 coordinates ATP. The Smr domain occupies Leu712–Lys787.

It belongs to the DNA mismatch repair MutS family. MutS2 subfamily. In terms of assembly, homodimer. Binds to stalled ribosomes, contacting rRNA.

Its function is as follows. Endonuclease that is involved in the suppression of homologous recombination and thus may have a key role in the control of bacterial genetic diversity. Functionally, acts as a ribosome collision sensor, splitting the ribosome into its 2 subunits. Detects stalled/collided 70S ribosomes which it binds and splits by an ATP-hydrolysis driven conformational change. Acts upstream of the ribosome quality control system (RQC), a ribosome-associated complex that mediates the extraction of incompletely synthesized nascent chains from stalled ribosomes and their subsequent degradation. Probably generates substrates for RQC. The protein is Endonuclease MutS2 of Shouchella clausii (strain KSM-K16) (Alkalihalobacillus clausii).